The following is a 227-amino-acid chain: Enolase-phosphatase E1 (227 aa).

Residues D11 and E13 each contribute to the Mg(2+) site. Residues S118–S119 and K161 each bind substrate. Position 186 (D186) interacts with Mg(2+).

It belongs to the HAD-like hydrolase superfamily. MasA/MtnC family. In terms of assembly, monomer. Mg(2+) serves as cofactor.

The protein resides in the cytoplasm. Its subcellular location is the nucleus. The enzyme catalyses 5-methylsulfanyl-2,3-dioxopentyl phosphate + H2O = 1,2-dihydroxy-5-(methylsulfanyl)pent-1-en-3-one + phosphate. It functions in the pathway amino-acid biosynthesis; L-methionine biosynthesis via salvage pathway; L-methionine from S-methyl-5-thio-alpha-D-ribose 1-phosphate: step 3/6. Its pathway is amino-acid biosynthesis; L-methionine biosynthesis via salvage pathway; L-methionine from S-methyl-5-thio-alpha-D-ribose 1-phosphate: step 4/6. Its function is as follows. Bifunctional enzyme that catalyzes the enolization of 2,3-diketo-5-methylthiopentyl-1-phosphate (DK-MTP-1-P) into the intermediate 2-hydroxy-3-keto-5-methylthiopentenyl-1-phosphate (HK-MTPenyl-1-P), which is then dephosphorylated to form the acireductone 1,2-dihydroxy-3-keto-5-methylthiopentene (DHK-MTPene). In Saccharomyces cerevisiae (strain ATCC 204508 / S288c) (Baker's yeast), this protein is Enolase-phosphatase E1.